Reading from the N-terminus, the 226-residue chain is NADH-ubiquinone oxidoreductase 19.3 kDa subunit, mitochondrial (226 aa).

Positions A40 to G68 are disordered. [4Fe-4S] cluster-binding residues include C101, C102, C166, and C196.

Belongs to the complex I 20 kDa subunit family. Complex I is composed of about 40 different subunits. This is a component of the iron-sulfur (IP) fragment of the enzyme. It depends on [4Fe-4S] cluster as a cofactor.

Its subcellular location is the mitochondrion. It catalyses the reaction a ubiquinone + NADH + 5 H(+)(in) = a ubiquinol + NAD(+) + 4 H(+)(out). In terms of biological role, core subunit of the mitochondrial membrane respiratory chain NADH dehydrogenase (Complex I) that is believed to belong to the minimal assembly required for catalysis. Complex I functions in the transfer of electrons from NADH to the respiratory chain. The immediate electron acceptor for the enzyme is believed to be ubiquinone. The protein is NADH-ubiquinone oxidoreductase 19.3 kDa subunit, mitochondrial of Neurospora crassa (strain ATCC 24698 / 74-OR23-1A / CBS 708.71 / DSM 1257 / FGSC 987).